The following is a 940-amino-acid chain: Translation initiation factor IF-2 (940 aa).

Disordered stretches follow at residues 116 to 137, 151 to 196, 210 to 294, and 318 to 346; these read PEQEQLESTSVAEIPESVSSDT, EVEA…EQRS, AVRK…VKKV, and HSAPKSKKGGQNNNSSNSGSRPLIKVANR. The segment covering 121 to 137 has biased composition (polar residues); sequence LESTSVAEIPESVSSDT. Residues 159–180 show a composition bias toward acidic residues; the sequence is PEPEVEATPEPEVEDVVAEEAE. Over residues 181–193 the composition is skewed to low complexity; the sequence is PAAAEPAPAPVVE. Residues 213–239 show a composition bias toward basic and acidic residues; it reads KKAEEEAEVARRKADAEKAEAAAKQKA. Positions 282–294 are enriched in basic residues; that stretch reads KHNKKAGKAVKKV. The segment covering 326–337 has biased composition (low complexity); it reads GGQNNNSSNSGS. In terms of domain architecture, tr-type G spans 441 to 610; that stretch reads ARAPVVTVMG…ALQAELLELS (170 aa). The tract at residues 450–457 is G1; that stretch reads GHVDHGKT. 450-457 provides a ligand contact to GTP; that stretch reads GHVDHGKT. The interval 475–479 is G2; it reads GITQH. Residues 496 to 499 form a G3 region; it reads DTPG. GTP contacts are provided by residues 496–500 and 550–553; these read DTPGH and NKID. Positions 550–553 are G4; it reads NKID. Positions 586-588 are G5; it reads SAQ.

It belongs to the TRAFAC class translation factor GTPase superfamily. Classic translation factor GTPase family. IF-2 subfamily.

The protein localises to the cytoplasm. Its function is as follows. One of the essential components for the initiation of protein synthesis. Protects formylmethionyl-tRNA from spontaneous hydrolysis and promotes its binding to the 30S ribosomal subunits. Also involved in the hydrolysis of GTP during the formation of the 70S ribosomal complex. The protein is Translation initiation factor IF-2 of Teredinibacter turnerae (strain ATCC 39867 / T7901).